The chain runs to 399 residues: Tryptophan synthase beta chain (399 aa).

At Lys90 the chain carries N6-(pyridoxal phosphate)lysine.

This sequence belongs to the TrpB family. In terms of assembly, tetramer of two alpha and two beta chains. It depends on pyridoxal 5'-phosphate as a cofactor.

It catalyses the reaction (1S,2R)-1-C-(indol-3-yl)glycerol 3-phosphate + L-serine = D-glyceraldehyde 3-phosphate + L-tryptophan + H2O. The protein operates within amino-acid biosynthesis; L-tryptophan biosynthesis; L-tryptophan from chorismate: step 5/5. Functionally, the beta subunit is responsible for the synthesis of L-tryptophan from indole and L-serine. The chain is Tryptophan synthase beta chain from Bacillus pumilus (strain SAFR-032).